We begin with the raw amino-acid sequence, 463 residues long: Glutamate--tRNA ligase (463 aa).

The 'HIGH' region signature appears at 10 to 20 (PSPTGHLHIGG). The short motif at 236–240 (KLSKR) is the 'KMSKS' region element. K239 contacts ATP.

It belongs to the class-I aminoacyl-tRNA synthetase family. Glutamate--tRNA ligase type 1 subfamily. As to quaternary structure, monomer.

The protein localises to the cytoplasm. The enzyme catalyses tRNA(Glu) + L-glutamate + ATP = L-glutamyl-tRNA(Glu) + AMP + diphosphate. Functionally, catalyzes the attachment of glutamate to tRNA(Glu) in a two-step reaction: glutamate is first activated by ATP to form Glu-AMP and then transferred to the acceptor end of tRNA(Glu). This is Glutamate--tRNA ligase from Nitratidesulfovibrio vulgaris (strain ATCC 29579 / DSM 644 / CCUG 34227 / NCIMB 8303 / VKM B-1760 / Hildenborough) (Desulfovibrio vulgaris).